The chain runs to 252 residues: Imidazole glycerol phosphate synthase subunit HisF (252 aa).

Active-site residues include Asp11 and Asp130.

Belongs to the HisA/HisF family. As to quaternary structure, heterodimer of HisH and HisF.

The protein resides in the cytoplasm. The catalysed reaction is 5-[(5-phospho-1-deoxy-D-ribulos-1-ylimino)methylamino]-1-(5-phospho-beta-D-ribosyl)imidazole-4-carboxamide + L-glutamine = D-erythro-1-(imidazol-4-yl)glycerol 3-phosphate + 5-amino-1-(5-phospho-beta-D-ribosyl)imidazole-4-carboxamide + L-glutamate + H(+). It participates in amino-acid biosynthesis; L-histidine biosynthesis; L-histidine from 5-phospho-alpha-D-ribose 1-diphosphate: step 5/9. Its function is as follows. IGPS catalyzes the conversion of PRFAR and glutamine to IGP, AICAR and glutamate. The HisF subunit catalyzes the cyclization activity that produces IGP and AICAR from PRFAR using the ammonia provided by the HisH subunit. This chain is Imidazole glycerol phosphate synthase subunit HisF, found in Hydrogenobaculum sp. (strain Y04AAS1).